Here is a 147-residue protein sequence, read N- to C-terminus: Small ribosomal subunit protein bS16 (147 aa).

The tract at residues Gln81–Ala147 is disordered. 2 stretches are compositionally biased toward basic and acidic residues: residues Gln95 to Leu104 and Glu114 to Glu125. A compositionally biased stretch (low complexity) spans Gly126 to Asn140.

Belongs to the bacterial ribosomal protein bS16 family.

The chain is Small ribosomal subunit protein bS16 from Cutibacterium acnes (strain DSM 16379 / KPA171202) (Propionibacterium acnes).